The chain runs to 480 residues: Sialyltransferase-like protein 5 (480 aa).

At 1–17 (MARAPPPLSSLPPPPRR) the chain is on the cytoplasmic side. A signal-anchor for type II membrane protein transmembrane segment spans residues 18-38 (PTVVLLLGLALAFCLAVLSIQ). At 39–480 (SSFFTAPRLA…VCVRHERSSS (442 aa)) the chain is on the lumenal side. 4 N-linked (GlcNAc...) asparagine glycosylation sites follow: Asn-98, Asn-130, Asn-165, and Asn-321.

Belongs to the glycosyltransferase 29 family.

The protein localises to the golgi apparatus membrane. May possess sialyltransferase-like activity in vitro. In Oryza sativa subsp. japonica (Rice), this protein is Sialyltransferase-like protein 5.